The sequence spans 366 residues: MAIISSKKQPPEPNGEPKQRRESAKAPSTENILKPEAAIDEQEQQEEGIRPHRFADYIGQKDLKDVLDIAIKAAKSRGEVLDHLLLYGPPGLGKTTMAMILASEMGVNYKITSAPALERPRDIVGLLVNMKPGDILFVDEIHRLSRMTEEILYPAMEDYRLDITIGKGSSARIRSLPLSKFTLVGATTRVGALTSPLRDRFGLIQKLRFYEVDELTQIVLRTAQLLKTPVTQDGATEIARRSRGTPRIANRLLKRVRDYAEVKVSGVINESIASEALQLFQVDPCGLDWTDRQMLSVIIEQFNGGPVGLETMAAATGEDTQTIEEVYEPYLMQIGYLTRTHRGRMATKAAYKHLGFTPPNEQLSLL.

Residues M1–R50 are disordered. A large ATPase domain (RuvB-L) region spans residues P13–Y210. Residues G15–A24 show a composition bias toward basic and acidic residues. ATP contacts are provided by residues I49, R50, G91, K94, T95, T96, E157 to Y159, R200, Y210, and R247. Mg(2+) is bound at residue T95. Residues E211–Q281 form a small ATPAse domain (RuvB-S) region. The tract at residues P284–L366 is head domain (RuvB-H). The DNA site is built by R339 and R344.

It belongs to the RuvB family. In terms of assembly, homohexamer. Forms an RuvA(8)-RuvB(12)-Holliday junction (HJ) complex. HJ DNA is sandwiched between 2 RuvA tetramers; dsDNA enters through RuvA and exits via RuvB. An RuvB hexamer assembles on each DNA strand where it exits the tetramer. Each RuvB hexamer is contacted by two RuvA subunits (via domain III) on 2 adjacent RuvB subunits; this complex drives branch migration. In the full resolvosome a probable DNA-RuvA(4)-RuvB(12)-RuvC(2) complex forms which resolves the HJ.

The protein resides in the cytoplasm. It carries out the reaction ATP + H2O = ADP + phosphate + H(+). Its function is as follows. The RuvA-RuvB-RuvC complex processes Holliday junction (HJ) DNA during genetic recombination and DNA repair, while the RuvA-RuvB complex plays an important role in the rescue of blocked DNA replication forks via replication fork reversal (RFR). RuvA specifically binds to HJ cruciform DNA, conferring on it an open structure. The RuvB hexamer acts as an ATP-dependent pump, pulling dsDNA into and through the RuvAB complex. RuvB forms 2 homohexamers on either side of HJ DNA bound by 1 or 2 RuvA tetramers; 4 subunits per hexamer contact DNA at a time. Coordinated motions by a converter formed by DNA-disengaged RuvB subunits stimulates ATP hydrolysis and nucleotide exchange. Immobilization of the converter enables RuvB to convert the ATP-contained energy into a lever motion, pulling 2 nucleotides of DNA out of the RuvA tetramer per ATP hydrolyzed, thus driving DNA branch migration. The RuvB motors rotate together with the DNA substrate, which together with the progressing nucleotide cycle form the mechanistic basis for DNA recombination by continuous HJ branch migration. Branch migration allows RuvC to scan DNA until it finds its consensus sequence, where it cleaves and resolves cruciform DNA. The chain is Holliday junction branch migration complex subunit RuvB from Nostoc punctiforme (strain ATCC 29133 / PCC 73102).